The primary structure comprises 156 residues: CKLF-like MARVEL transmembrane domain-containing protein 5 (156 aa).

The MARVEL domain maps to 29 to 146; it reads FLSSLKGILL…DAFKIYRTEL (118 aa). A run of 4 helical transmembrane segments spans residues 35–55, 56–76, 93–113, and 119–139; these read GILLETELALTFIIFICFTAS, ISAYMAAALLEFLITLAFLFL, LDFLRCLSAIVIFLVVSFAAV, and AAIAAFVFGIILVSVFAYDAF.

Belongs to the chemokine-like factor family.

Its subcellular location is the membrane. This is CKLF-like MARVEL transmembrane domain-containing protein 5 (Cmtm5) from Mus musculus (Mouse).